The chain runs to 308 residues: Ornithine carbamoyltransferase (308 aa).

Residues 50-53 (STRT), Gln-77, Arg-101, and 128-131 (HPCQ) each bind carbamoyl phosphate. Residues Asn-160, Asp-224, and 228–229 (SM) each bind L-ornithine. Residues 264–265 (CL) and Arg-292 contribute to the carbamoyl phosphate site.

Belongs to the aspartate/ornithine carbamoyltransferase superfamily. OTCase family.

It is found in the cytoplasm. The catalysed reaction is carbamoyl phosphate + L-ornithine = L-citrulline + phosphate + H(+). It functions in the pathway amino-acid biosynthesis; L-arginine biosynthesis; L-arginine from L-ornithine and carbamoyl phosphate: step 1/3. Functionally, reversibly catalyzes the transfer of the carbamoyl group from carbamoyl phosphate (CP) to the N(epsilon) atom of ornithine (ORN) to produce L-citrulline. This Mycobacterium ulcerans (strain Agy99) protein is Ornithine carbamoyltransferase.